The sequence spans 300 residues: ATP-dependent (S)-NAD(P)H-hydrate dehydratase (300 aa).

In terms of domain architecture, YjeF C-terminal spans 6–297 (YAGKIKEFIP…GCIHQSFTSL (292 aa)). Residues glycine 106 and 158-164 (NEVEFKR) contribute to the (6S)-NADPHX site. Residues 188–192 (KGSTD) and 218–227 (GSNRRCGGQG) contribute to the ATP site. Residue aspartate 228 coordinates (6S)-NADPHX.

It belongs to the NnrD/CARKD family. Requires Mg(2+) as cofactor.

The enzyme catalyses (6S)-NADHX + ATP = ADP + phosphate + NADH + H(+). It carries out the reaction (6S)-NADPHX + ATP = ADP + phosphate + NADPH + H(+). Its function is as follows. Catalyzes the dehydration of the S-form of NAD(P)HX at the expense of ATP, which is converted to ADP. Together with NAD(P)HX epimerase, which catalyzes the epimerization of the S- and R-forms, the enzyme allows the repair of both epimers of NAD(P)HX, a damaged form of NAD(P)H that is a result of enzymatic or heat-dependent hydration. The sequence is that of ATP-dependent (S)-NAD(P)H-hydrate dehydratase from Pediculus humanus subsp. corporis (Body louse).